The primary structure comprises 397 residues: Probable transport protein MmpL6 (397 aa).

The next 5 helical transmembrane spans lie at 190–210 (YDLL…MMII), 214–234 (LVAA…SFGL), 242–262 (LLGI…LLAV), 293–313 (TGGV…SFVF), and 328–348 (LGLL…IAVL).

Belongs to the resistance-nodulation-cell division (RND) (TC 2.A.6) family. MmpL subfamily.

The protein localises to the cell membrane. The polypeptide is Probable transport protein MmpL6 (mmpL6) (Mycobacterium tuberculosis (strain CDC 1551 / Oshkosh)).